We begin with the raw amino-acid sequence, 343 residues long: Cyclin-Y-like protein 1 (343 aa).

Residues 1-48 form a disordered region; the sequence is MGNTVTCCVSPDASPKAGRDRAVTERGEPYQAQVELQETDPGPHLQHI. Over residues 17 to 28 the composition is skewed to basic and acidic residues; that stretch reads AGRDRAVTERGE. In terms of domain architecture, Cyclin N-terminal spans 145–267; the sequence is EIFDEKLHPL…FLELLQFNIN (123 aa).

Belongs to the cyclin family. Cyclin Y subfamily.

It localises to the cell membrane. Key regulator of Wnt signaling implicated in various biological processes, such as embryonic neurogenesis. This is Cyclin-Y-like protein 1 (ccnyl1) from Xenopus tropicalis (Western clawed frog).